A 119-amino-acid chain; its full sequence is Large ribosomal subunit protein bL20c (119 aa).

The protein belongs to the bacterial ribosomal protein bL20 family.

It localises to the plastid. Its subcellular location is the chloroplast. Binds directly to 23S ribosomal RNA and is necessary for the in vitro assembly process of the 50S ribosomal subunit. It is not involved in the protein synthesizing functions of that subunit. The protein is Large ribosomal subunit protein bL20c of Brachypodium distachyon (Purple false brome).